Here is a 159-residue protein sequence, read N- to C-terminus: U1 small nuclear ribonucleoprotein C (159 aa).

Residues Phe-4 to Asp-36 form a Matrin-type zinc finger. The tract at residues Lys-61–Gly-99 is disordered. 2 stretches are compositionally biased toward pro residues: residues Pro-63–Gly-74 and Gly-84–Gly-99.

The protein belongs to the U1 small nuclear ribonucleoprotein C family. As to quaternary structure, component of the U1 snRNP. The U1 snRNP is composed of the U1 snRNA and the 7 core Sm proteins snrpb, snrpd1, snrpd2, snrpd3, snrpe, snrpf and snrpg that assemble in a heptameric protein ring on the Sm site of the small nuclear RNA to form the core snRNP, and at least 3 U1 snRNP-specific proteins snrnp70/U1-70K, snrpa/U1-A and snrpc/U1-C. snrpc/U1-C interacts with U1 snRNA and the 5' splice-site region of the pre-mRNA.

It is found in the nucleus. In terms of biological role, component of the spliceosomal U1 snRNP, which is essential for recognition of the pre-mRNA 5' splice-site and the subsequent assembly of the spliceosome. snrpc/U1-C is directly involved in initial 5' splice-site recognition for both constitutive and regulated alternative splicing. The interaction with the 5' splice-site seems to precede base-pairing between the pre-mRNA and the U1 snRNA. Stimulates commitment or early (E) complex formation by stabilizing the base pairing of the 5' end of the U1 snRNA and the 5' splice-site region. This is U1 small nuclear ribonucleoprotein C from Danio rerio (Zebrafish).